Reading from the N-terminus, the 166-residue chain is Large ribosomal subunit protein mL41 (166 aa).

Residues 1–26 (MQNCIKLVPLALKCPQRAISTSAVLD) constitute a mitochondrion transit peptide.

Belongs to the mitochondrion-specific ribosomal protein mL41 family. Component of the mitochondrial ribosome large subunit (39S) which comprises a 16S rRNA and about 50 distinct proteins.

Its subcellular location is the mitochondrion. This chain is Large ribosomal subunit protein mL41 (mRpL41), found in Drosophila pseudoobscura pseudoobscura (Fruit fly).